Consider the following 454-residue polypeptide: ESX-1 secretion-associated protein EspB (454 aa).

Disordered regions lie at residues 17–40 (RADE…SGLT), 82–128 (GEVE…AGES), and 391–454 (AGQG…QDNK). Residues 391–422 (AGQGGGAAGRGMAGGGMGMPMGGAGQGQGGAK) show a composition bias toward gly residues.

This sequence belongs to the EspB family. Cleaved at close to the C-terminus during secretion.

It is found in the secreted. The polypeptide is ESX-1 secretion-associated protein EspB (Mycobacterium marinum (strain ATCC BAA-535 / M)).